The sequence spans 265 residues: Glutamate racemase (265 aa).

Residues 12–13 (DS) and 44–45 (YG) contribute to the substrate site. Cys75 (proton donor/acceptor) is an active-site residue. 76-77 (NT) lines the substrate pocket. Catalysis depends on Cys186, which acts as the Proton donor/acceptor. 187-188 (TH) contributes to the substrate binding site.

The protein belongs to the aspartate/glutamate racemases family.

The enzyme catalyses L-glutamate = D-glutamate. It functions in the pathway cell wall biogenesis; peptidoglycan biosynthesis. In terms of biological role, provides the (R)-glutamate required for cell wall biosynthesis. This is Glutamate racemase from Pseudomonas putida (strain ATCC 700007 / DSM 6899 / JCM 31910 / BCRC 17059 / LMG 24140 / F1).